The sequence spans 667 residues: Gamma-tubulin complex component 4 (667 aa).

The tract at residues Asp424–Pro446 is disordered.

This sequence belongs to the TUBGCP family. In terms of assembly, component of the gamma-tubulin ring complex (gTuRC) consisting of TUBGCP2, TUBGCP3, TUBGCP4, TUBGCP5 and TUBGCP6 and gamma-tubulin TUBG1 or TUBG2. TUBGCP2, TUBGCP3, TUBGCP4, TUBGCP5 and TUBGCP6 assemble in a 5:5:2:1:1 stoichiometry; each is associated with a gamma-tubulin, thereby arranging 14 gamma-tubulins in a helical manner. Gamma-tubulin at the first position is blocked by TUBGCP3 at the last position, allowing 13 protafilaments to grow into a microtubule. The gTuRC (via TUBGCP3 and TUBGCP6) interacts with ACTB and MZT1; the interactions form a luminal bridge that stabilizes the initial structure during complex assembly. The gTuRC (via TUBGCP2) interacts with MZT2A/MZT2B and CDK5RAP2 (via CM1 motif); the interactions play a role in gTuRC activation. Interacts with NINL. Interacts with ATF5; the ATF5:PCNT:polyglutamylated tubulin (PGT) tripartite unites the mother centriole and the pericentriolar material (PCM) in the centrosome.

It localises to the cytoplasm. The protein resides in the cytoskeleton. It is found in the microtubule organizing center. Its subcellular location is the centrosome. Its function is as follows. Component of the gamma-tubulin ring complex (gTuRC) which mediates microtubule nucleation. The gTuRC regulates the minus-end nucleation of alpha-beta tubulin heterodimers that grow into microtubule protafilaments, a critical step in centrosome duplication and spindle formation. The sequence is that of Gamma-tubulin complex component 4 (Tubgcp4) from Mus musculus (Mouse).